Reading from the N-terminus, the 470-residue chain is Argininosuccinate lyase (470 aa).

It belongs to the lyase 1 family. Argininosuccinate lyase subfamily.

The protein localises to the cytoplasm. It catalyses the reaction 2-(N(omega)-L-arginino)succinate = fumarate + L-arginine. It participates in amino-acid biosynthesis; L-arginine biosynthesis; L-arginine from L-ornithine and carbamoyl phosphate: step 3/3. This Leptospira borgpetersenii serovar Hardjo-bovis (strain JB197) protein is Argininosuccinate lyase.